A 248-amino-acid polypeptide reads, in one-letter code: 3-deoxy-manno-octulosonate cytidylyltransferase (248 aa).

Belongs to the KdsB family.

The protein resides in the cytoplasm. The catalysed reaction is 3-deoxy-alpha-D-manno-oct-2-ulosonate + CTP = CMP-3-deoxy-beta-D-manno-octulosonate + diphosphate. The protein operates within nucleotide-sugar biosynthesis; CMP-3-deoxy-D-manno-octulosonate biosynthesis; CMP-3-deoxy-D-manno-octulosonate from 3-deoxy-D-manno-octulosonate and CTP: step 1/1. Its pathway is bacterial outer membrane biogenesis; lipopolysaccharide biosynthesis. In terms of biological role, activates KDO (a required 8-carbon sugar) for incorporation into bacterial lipopolysaccharide in Gram-negative bacteria. The polypeptide is 3-deoxy-manno-octulosonate cytidylyltransferase (Enterobacter sp. (strain 638)).